The primary structure comprises 876 residues: Pre-mRNA-splicing factor ATP-dependent RNA helicase-like protein PRP2 (876 aa).

The disordered stretch occupies residues 1–111 (MSSITSETGK…KGLLGDSENE (111 aa)). The residue at position 2 (Ser2) is an N-acetylserine. Over residues 61–70 (VFSNTNQGPE) the composition is skewed to polar residues. One can recognise a Helicase ATP-binding domain in the interval 233–399 (LQEIKKNQVL…FDNCPIFNVP (167 aa)). 246–253 (GETGSGKT) is a binding site for ATP. The short motif at 346–349 (DEAH) is the DEAH box element. One can recognise a Helicase C-terminal domain in the interval 424–598 (TIFQIHTTQS…NTVLLLLSLG (175 aa)).

It belongs to the DEAD box helicase family. DEAH subfamily. As to quaternary structure, interacts directly with pre-mRNA. According to PubMed:2251118, associated with spliceosomes prior to and throughout step 1 of the splicing reaction. According to PubMed:8943336, it leaves the spliceosome before reaction 1. Interacts with SPP2.

It localises to the nucleus. The catalysed reaction is ATP + H2O = ADP + phosphate + H(+). In terms of biological role, involved in pre-mRNA splicing. Is required together with ATP and at least one other factor, for the first cleavage-ligation reaction. Functions as a molecular motor in the activation of the precatalytic spliceosome for the first transesterification reaction of pre-mRNA splicing by hydrolyzing ATP to cause the activation of the spliceosome without the occurrence of splicing. Capable of hydrolyzing nucleoside triphosphates in the presence of single-stranded RNAs such as poly(U). The chain is Pre-mRNA-splicing factor ATP-dependent RNA helicase-like protein PRP2 (PRP2) from Saccharomyces cerevisiae (strain ATCC 204508 / S288c) (Baker's yeast).